The primary structure comprises 271 residues: Zinc-finger homeodomain protein 8 (271 aa).

A Phosphoserine modification is found at serine 16. The ZF-HD dimerization-type; degenerate zinc-finger motif lies at 56-107; that stretch reads YKECLKNHAAGIGGHALDGCGEFMPSPSFNSNDPASLTCAACGCHRNFHRRE. Positions 125 to 154 are disordered; it reads HNRHQLPPPPPPHLAGIRSPDDDDSASPPP. A DNA-binding region (homeobox) is located at residues 179 to 242; sequence RKRFRTKFSQ…NNKISGRSGA (64 aa).

In terms of assembly, homo- and heterodimer with other ZFHD proteins. Interacts with MIF1, MIF2 and MIF3; these interactions prevent nuclear localization and DNA-binding to inhibit transcription regulation activity. Binds to ZHD1, ZHD2, ZHD4, ZHD10 and ZHD11. Interacts with HIPP30. As to expression, mostly expressed in flowers and inflorescence.

The protein resides in the nucleus. Putative transcription factor. This is Zinc-finger homeodomain protein 8 (ZHD8) from Arabidopsis thaliana (Mouse-ear cress).